A 270-amino-acid chain; its full sequence is Co-chaperone protein DjlA (270 aa).

Topologically, residues 1-6 (MQYWGK) are periplasmic. A helical transmembrane segment spans residues 7–31 (IIGVAVALMMGGGFWGVVLGLLVGH). The Cytoplasmic segment spans residues 32–270 (MFDKARSRKM…ELIKEQKGFK (239 aa)). Residues 204–270 (DACNVLGVKT…ELIKEQKGFK (67 aa)) enclose the J domain.

In terms of assembly, homodimer.

Its subcellular location is the cell inner membrane. In terms of biological role, regulatory DnaK co-chaperone. Direct interaction between DnaK and DjlA is needed for the induction of the wcaABCDE operon, involved in the synthesis of a colanic acid polysaccharide capsule, possibly through activation of the RcsB/RcsC phosphotransfer signaling pathway. The colanic acid capsule may help the bacterium survive conditions outside the host. This is Co-chaperone protein DjlA from Salmonella paratyphi A (strain ATCC 9150 / SARB42).